Consider the following 304-residue polypeptide: Myelin basic protein (304 aa).

Basic and acidic residues-rich tracts occupy residues 1 to 12 (MGNHAGKRELNA) and 22 to 32 (NRGESEKKRNL). The segment at 1-146 (MGNHAGKREL…QKRPSQRHGS (146 aa)) is disordered. An N-acetylalanine modification is found at glycine 2. The segment covering 51-65 (ANQNNGTSSQDTAVT) has biased composition (polar residues). Residues 95–113 (FSRDAPGREDNTFKDRPSE) are compositionally biased toward basic and acidic residues. Serine 96 is modified (phosphoserine). The segment covering 117–130 (LQTIQEDSAATSES) has biased composition (polar residues). Serine 141 and serine 146 each carry phosphoserine. Tyrosine 148 bears the Phosphotyrosine mark. A Phosphothreonine modification is found at threonine 151. Residue serine 153 is modified to Phosphoserine. At threonine 154 the chain carries Phosphothreonine. Citrulline; in form C8 occurs at positions 159 and 165. Position 167 is a citrulline (arginine 167). At threonine 169 the chain carries Phosphothreonine. Residue serine 174 is modified to Phosphoserine. An omega-N-methylarginine mark is found at arginine 177 and arginine 183. Positions 179-222 (FGGDRGAPKRGSGKDSHHPARTAHYGSLPQKSHGRTQDENPVVH) are induces experimental autoimmune encephalomyelitis (EAE) 1. Residues 180 to 249 (GGDRGAPKRG…GRGLSLSRFS (70 aa)) are disordered. Serine 190 carries the phosphoserine modification. Arginine 199 carries the post-translational modification Citrulline. At tyrosine 203 the chain carries Phosphotyrosine. Serine 210 is subject to Phosphoserine. Residues threonine 214 and threonine 229 each carry the phosphothreonine modification. Arginine 231 carries the post-translational modification Citrulline. Threonine 232 carries the phosphothreonine modification. Glutamine 237 carries the post-translational modification Deamidated glutamine. Arginine 241 carries the omega-N-methylarginine; alternate modification. Residue arginine 241 is modified to Symmetric dimethylarginine; alternate. The induces experimental autoimmune encephalomyelitis (EAE) 2 stretch occupies residues 246–256 (SRFSWGAEGQR). Residue serine 249 is modified to Phosphoserine. Residues arginine 256 and arginine 264 each carry the citrulline; in form C8 modification. Glutamine 281 bears the Deamidated glutamine mark. Arginine 293 is modified (citrulline; in form C8). Serine 295 is modified (phosphoserine). Arginine 296 carries the citrulline modification. The residue at position 299 (serine 299) is a Phosphoserine; by UHMK1. Arginine 303 is modified (citrulline). Arginine 304 is modified (citrulline; in form C8).

Belongs to the myelin basic protein family. As to quaternary structure, homodimer. Isoform 3 exists as a homodimer. Several charge isomers of MBP; C1 (the most cationic, least modified, and most abundant form), C2, C3, C4, C5, C6, C7, C8-A and C8-B (the least cationic form); are produced as a result of optional PTM, such as phosphorylation, deamidation of glutamine or asparagine, arginine citrullination and methylation. C8-A and C8-B contain each two mass isoforms termed C8-A(H), C8-A(L), C8-B(H) and C8-B(L), (H) standing for higher and (L) for lower molecular weight. C3, C4 and C5 are phosphorylated. The ratio of methylated arginine residues decreases during aging, making the protein more cationic. Post-translationally, the N-terminal alanine is acetylated (isoform 3, isoform 4, isoform 5 and isoform 6). In terms of processing, arg-241 was found to be 6% monomethylated and 60% symmetrically dimethylated. Proteolytically cleaved in B cell lysosomes by cathepsin CTSG which degrades the major immunogenic MBP epitope and prevents the activation of MBP-specific autoreactive T cells. Post-translationally, phosphorylated by TAOK2, VRK2, MAPK11, MAPK12, MAPK14 and MINK1. In terms of tissue distribution, MBP isoforms are found in both the central and the peripheral nervous system, whereas Golli-MBP isoforms are expressed in fetal thymus, spleen and spinal cord, as well as in cell lines derived from the immune system.

It localises to the myelin membrane. The protein localises to the nucleus. Its function is as follows. The classic group of MBP isoforms (isoform 4-isoform 14) are with PLP the most abundant protein components of the myelin membrane in the CNS. They have a role in both its formation and stabilization. The smaller isoforms might have an important role in remyelination of denuded axons in multiple sclerosis. The non-classic group of MBP isoforms (isoform 1-isoform 3/Golli-MBPs) may preferentially have a role in the early developing brain long before myelination, maybe as components of transcriptional complexes, and may also be involved in signaling pathways in T-cells and neural cells. Differential splicing events combined with optional post-translational modifications give a wide spectrum of isomers, with each of them potentially having a specialized function. Induces T-cell proliferation. The sequence is that of Myelin basic protein (MBP) from Homo sapiens (Human).